The following is a 20-amino-acid chain: Alkaline phosphatase (20 aa).

Residues 1–20 (TDMLAVSVSSTDAIGHKYGT) form a disordered region.

As to quaternary structure, homodimer; may be disulfide-linked. Post-translationally, the N-terminus is blocked.

The catalysed reaction is a phosphate monoester + H2O = an alcohol + phosphate. With respect to regulation, completely inhibited by thiol-reducing agents, such as DTT and 2-mercaptoethanol. Activity was also inhibited by sodium orthovanadate, sodium molybdate, N-ethylmaleimide, EDTA and zinc ion, but was not inhibited by okadaic acid. In terms of biological role, acts against tyrosine-phosphatases. The sequence is that of Alkaline phosphatase from Prevotella intermedia.